Reading from the N-terminus, the 335-residue chain is Tryptophan--tRNA ligase (335 aa).

ATP-binding positions include 19-21 (QPS) and 28-29 (GN). The 'HIGH' region motif lies at 20-29 (PSSGMLHLGN). D143 provides a ligand contact to L-tryptophan. ATP is bound by residues 155–157 (GAD), I192, and 201–205 (KMSKS). The 'KMSKS' region motif lies at 201 to 205 (KMSKS).

It belongs to the class-I aminoacyl-tRNA synthetase family. Homodimer.

Its subcellular location is the cytoplasm. It carries out the reaction tRNA(Trp) + L-tryptophan + ATP = L-tryptophyl-tRNA(Trp) + AMP + diphosphate + H(+). Catalyzes the attachment of tryptophan to tRNA(Trp). The sequence is that of Tryptophan--tRNA ligase from Tropheryma whipplei (strain Twist) (Whipple's bacillus).